A 464-amino-acid polypeptide reads, in one-letter code: Dihydrolipoyllysine-residue succinyltransferase component of 2-oxoglutarate dehydrogenase complex 1, mitochondrial (464 aa).

The N-terminal 86 residues, 1-86, are a transit peptide targeting the mitochondrion; sequence MMLRAVFRRA…TALQRWVRPF (86 aa). One can recognise a Lipoyl-binding domain in the interval 93-168; that stretch reads VVEAVVPHMG…EPGNKVARIS (76 aa). At K134 the chain carries N6-lipoyllysine. Residues 168 to 242 are disordered; that stretch reads STSADAVSHV…DRERRVPMTR (75 aa). Positions 196-210 are enriched in basic and acidic residues; the sequence is EKPKVESTKVAEKPK. Pro residues predominate over residues 211–220; it reads APSPPPPPPS. Catalysis depends on residues H435 and D439.

The protein belongs to the 2-oxoacid dehydrogenase family. Forms a 24-polypeptide structural core with octahedral symmetry. It depends on (R)-lipoate as a cofactor.

The protein localises to the mitochondrion. It carries out the reaction N(6)-[(R)-dihydrolipoyl]-L-lysyl-[protein] + succinyl-CoA = N(6)-[(R)-S(8)-succinyldihydrolipoyl]-L-lysyl-[protein] + CoA. It functions in the pathway amino-acid degradation; L-lysine degradation via saccharopine pathway; glutaryl-CoA from L-lysine: step 6/6. The 2-oxoglutarate dehydrogenase complex catalyzes the overall conversion of 2-oxoglutarate to succinyl-CoA and CO(2). It contains multiple copies of three enzymatic components: 2-oxoglutarate dehydrogenase (E1), dihydrolipoamide succinyltransferase (E2) and lipoamide dehydrogenase (E3). This is Dihydrolipoyllysine-residue succinyltransferase component of 2-oxoglutarate dehydrogenase complex 1, mitochondrial from Arabidopsis thaliana (Mouse-ear cress).